The sequence spans 188 residues: Ribosome maturation factor RimM (188 aa).

Residues 103 to 177 (EEGWYYADLI…RVVIDPPAGT (75 aa)) form the PRC barrel domain.

It belongs to the RimM family. In terms of assembly, binds ribosomal protein uS19.

It is found in the cytoplasm. An accessory protein needed during the final step in the assembly of 30S ribosomal subunit, possibly for assembly of the head region. Essential for efficient processing of 16S rRNA. May be needed both before and after RbfA during the maturation of 16S rRNA. It has affinity for free ribosomal 30S subunits but not for 70S ribosomes. In Parvibaculum lavamentivorans (strain DS-1 / DSM 13023 / NCIMB 13966), this protein is Ribosome maturation factor RimM.